A 106-amino-acid polypeptide reads, in one-letter code: Large ribosomal subunit protein uL23 (106 aa).

Belongs to the universal ribosomal protein uL23 family. In terms of assembly, part of the 50S ribosomal subunit. Contacts protein L29, and trigger factor when it is bound to the ribosome.

Functionally, one of the early assembly proteins it binds 23S rRNA. One of the proteins that surrounds the polypeptide exit tunnel on the outside of the ribosome. Forms the main docking site for trigger factor binding to the ribosome. The sequence is that of Large ribosomal subunit protein uL23 from Acinetobacter baumannii (strain AB307-0294).